We begin with the raw amino-acid sequence, 429 residues long: Probable M18 family aminopeptidase 2 (429 aa).

Residues His82, His156, and His401 each contribute to the Zn(2+) site.

The protein belongs to the peptidase M18 family. Zn(2+) is required as a cofactor.

This is Probable M18 family aminopeptidase 2 from Stutzerimonas stutzeri (strain A1501) (Pseudomonas stutzeri).